A 574-amino-acid chain; its full sequence is Membrane protein insertase YidC (574 aa).

Residues 6–26 traverse the membrane as a helical segment; it reads VFLIFAWLMVAALLWMEWGKD. Residues 45–77 form a disordered region; the sequence is RDPDAAAPSAANVPSAQPIPQAGAPGTVPATSS. The next 5 helical transmembrane spans lie at 356–376, 380–400, 447–467, 489–509, and 525–545; these read FSIM…LHSF, WGWA…PLSA, GGCL…WVLV, PYFI…KLTP, and PLVF…YWVV.

It belongs to the OXA1/ALB3/YidC family. Type 1 subfamily. In terms of assembly, interacts with the Sec translocase complex via SecD. Specifically interacts with transmembrane segments of nascent integral membrane proteins during membrane integration.

It localises to the cell inner membrane. Functionally, required for the insertion and/or proper folding and/or complex formation of integral membrane proteins into the membrane. Involved in integration of membrane proteins that insert both dependently and independently of the Sec translocase complex, as well as at least some lipoproteins. Aids folding of multispanning membrane proteins. The chain is Membrane protein insertase YidC from Xanthomonas euvesicatoria pv. vesicatoria (strain 85-10) (Xanthomonas campestris pv. vesicatoria).